Consider the following 167-residue polypeptide: GTP-dependent dephospho-CoA kinase (167 aa).

GTP-binding residues include Asp39, Val41, Asp58, Lys60, and Glu117.

It belongs to the GTP-dependent DPCK family.

The catalysed reaction is 3'-dephospho-CoA + GTP = GDP + CoA + H(+). Its pathway is cofactor biosynthesis; coenzyme A biosynthesis. Its function is as follows. Catalyzes the GTP-dependent phosphorylation of the 3'-hydroxyl group of dephosphocoenzyme A to form coenzyme A (CoA). The polypeptide is GTP-dependent dephospho-CoA kinase (Korarchaeum cryptofilum (strain OPF8)).